Consider the following 62-residue polypeptide: Prokaryotic ubiquitin-like protein Pup (62 aa).

Residues 1 to 36 (MEKSSQIHGSKPGDDNADEPENAAGQSQIRKQGADD) form a disordered region. Residues 18–56 (DEPENAAGQSQIRKQGADDLLDEIDGLLESNAEEFVRSY) form an ARC ATPase binding region. Position 62 is a deamidated glutamine (Gln62). Residue Gln62 forms an Isoglutamyl lysine isopeptide (Gln-Lys) (interchain with K-? in acceptor proteins) linkage.

The protein belongs to the prokaryotic ubiquitin-like protein family. In terms of assembly, strongly interacts with the proteasome-associated ATPase ARC through a hydrophobic interface; the interacting region of Pup lies in its C-terminal half. There is one Pup binding site per ARC hexamer ring. Post-translationally, is modified by deamidation of its C-terminal glutamine to glutamate by the deamidase Dop, a prerequisite to the subsequent pupylation process.

It participates in protein degradation; proteasomal Pup-dependent pathway. In terms of biological role, protein modifier that is covalently attached to lysine residues of substrate proteins, thereby targeting them for proteasomal degradation. The tagging system is termed pupylation. This Corynebacterium kroppenstedtii (strain DSM 44385 / JCM 11950 / CIP 105744 / CCUG 35717) protein is Prokaryotic ubiquitin-like protein Pup.